Consider the following 185-residue polypeptide: Elongation factor P (185 aa).

This sequence belongs to the elongation factor P family.

It is found in the cytoplasm. The protein operates within protein biosynthesis; polypeptide chain elongation. Functionally, involved in peptide bond synthesis. Stimulates efficient translation and peptide-bond synthesis on native or reconstituted 70S ribosomes in vitro. Probably functions indirectly by altering the affinity of the ribosome for aminoacyl-tRNA, thus increasing their reactivity as acceptors for peptidyl transferase. The protein is Elongation factor P of Lachnoclostridium phytofermentans (strain ATCC 700394 / DSM 18823 / ISDg) (Clostridium phytofermentans).